A 775-amino-acid polypeptide reads, in one-letter code: 5-methyltetrahydropteroyltriglutamate--homocysteine methyltransferase (775 aa).

Residues 16–19 (REMK) and K115 contribute to the 5-methyltetrahydropteroyltri-L-glutamate site. Residues 435–437 (IGS) and E488 each bind L-homocysteine. Residues 435–437 (IGS) and E488 each bind L-methionine. Residues 519 to 520 (RC) and W565 contribute to the 5-methyltetrahydropteroyltri-L-glutamate site. D603 contacts L-homocysteine. L-methionine is bound at residue D603. E609 contacts 5-methyltetrahydropteroyltri-L-glutamate. Residues H645, C647, and E669 each coordinate Zn(2+). H698 functions as the Proton donor in the catalytic mechanism. Residue C730 coordinates Zn(2+).

This sequence belongs to the vitamin-B12 independent methionine synthase family. Zn(2+) serves as cofactor.

The enzyme catalyses 5-methyltetrahydropteroyltri-L-glutamate + L-homocysteine = tetrahydropteroyltri-L-glutamate + L-methionine. The protein operates within amino-acid biosynthesis; L-methionine biosynthesis via de novo pathway; L-methionine from L-homocysteine (MetE route): step 1/1. Its function is as follows. Catalyzes the transfer of a methyl group from 5-methyltetrahydrofolate to homocysteine resulting in methionine formation. This chain is 5-methyltetrahydropteroyltriglutamate--homocysteine methyltransferase, found in Coxiella burnetii (strain CbuG_Q212) (Coxiella burnetii (strain Q212)).